A 322-amino-acid polypeptide reads, in one-letter code: MHGRAYLLLQRDFYDLKENNYKGITARPVSEDMMEWEVEIEGLQNSVWQGLVFQLTIHFTSEYNYAPPVVKFVTIPFHPNVDPHTGQPCIDFLDNPKKWNTNYTLSSILLALQVMLSNPVLENPVNLEAARILTKDESLYRTILKLFNRPLQMKDDSQELPKDPHKCIGPTKTTSFSDYYQAWSRIATSKATEYYRTALLKDPNFIGQYYKWKKMDLQHHKEWNLKYSVIKCWLARKNRMPDEVRHSMEGIKLCPTQIPTTDEIFLESPTAINSVTNIYETEEEGWKSDTSLYENNTDEPWEEEVEDLISWINTLNTNTLED.

In terms of domain architecture, UBC core spans Arg4–Met153. Catalysis depends on Cys89, which acts as the Glycyl thioester intermediate.

It belongs to the ubiquitin-conjugating enzyme family. Post-translationally, autoubiquitinated in vitro in the presence of UBR5.

The enzyme catalyses S-ubiquitinyl-[E1 ubiquitin-activating enzyme]-L-cysteine + [E2 ubiquitin-conjugating enzyme]-L-cysteine = [E1 ubiquitin-activating enzyme]-L-cysteine + S-ubiquitinyl-[E2 ubiquitin-conjugating enzyme]-L-cysteine.. The protein operates within protein modification; protein ubiquitination. Catalyzes the covalent attachment of ubiquitin to other proteins. The sequence is that of Ubiquitin-conjugating enzyme E2 U (UBE2U) from Macaca fascicularis (Crab-eating macaque).